Here is a 231-residue protein sequence, read N- to C-terminus: Enolase-phosphatase E1 (231 aa).

Residues 206–231 (LLERPGNAPQPKHSHPKISSFENFNP) are disordered.

Belongs to the HAD-like hydrolase superfamily. MasA/MtnC family. Monomer. Mg(2+) is required as a cofactor.

The enzyme catalyses 5-methylsulfanyl-2,3-dioxopentyl phosphate + H2O = 1,2-dihydroxy-5-(methylsulfanyl)pent-1-en-3-one + phosphate. The protein operates within amino-acid biosynthesis; L-methionine biosynthesis via salvage pathway; L-methionine from S-methyl-5-thio-alpha-D-ribose 1-phosphate: step 3/6. It functions in the pathway amino-acid biosynthesis; L-methionine biosynthesis via salvage pathway; L-methionine from S-methyl-5-thio-alpha-D-ribose 1-phosphate: step 4/6. Its function is as follows. Bifunctional enzyme that catalyzes the enolization of 2,3-diketo-5-methylthiopentyl-1-phosphate (DK-MTP-1-P) into the intermediate 2-hydroxy-3-keto-5-methylthiopentenyl-1-phosphate (HK-MTPenyl-1-P), which is then dephosphorylated to form the acireductone 1,2-dihydroxy-3-keto-5-methylthiopentene (DHK-MTPene). The polypeptide is Enolase-phosphatase E1 (Leptospira borgpetersenii serovar Hardjo-bovis (strain JB197)).